Consider the following 83-residue polypeptide: UPF0297 protein CKR_1221 (83 aa).

It belongs to the UPF0297 family.

This is UPF0297 protein CKR_1221 from Clostridium kluyveri (strain NBRC 12016).